Consider the following 618-residue polypeptide: MNDLQLSAELALFLTKLPSEPGIYRMLDEEGTVLYVGKAANLKKRVNSYFSKQNTGVKTRALVSQIKSIEISVTRSETEALLLESNLIKALRPKYNVLLRDDKSYPYIHLSNHPDFPRIELYRSKKKPPSGNFFGPYPGVAAVRETIVTIQKIFKIRNCRDSYFKARSRPCLQYQIKRCTAPCVHYISPENYKLSVEDAIRFLQGKCQIILDALAERMKQAVNQLNFEEAAVLRDQIKNLRLIQEQQGVVQLRGDADVIAIEVRPGFACIQCVTIREGQVLNSQSFFPTVPYAVLDEELDANSLWQQTFEAFIGFYYLDTTERIPDLIITNQSITESRSLEYILSQRRGKSCKIQVNPRGVKSRWMDFAVNNLRISVAEYVSKHSTIRSRYQALKQLLALDKNIERMECFDISHTQGEATVASCVVFDTEGPRPSEYRRFNIEGITPGDDYAAMEQAVTRRFKRLIDAQLLPDVLIIDGGKGQVSIVKRVLTSLGVEDITLLGVSKGPSRKAGWEKLILVNENREFVLPEDSKALHLLQHIRDEAHRFAITAHRKKRQKTRVESTLESIEGVGAKRRQALLQRFGGLRELAKAPLEEICKVQGISEQLAKRIHEHFHP.

Positions 19–97 (SEPGIYRMLD…IKALRPKYNV (79 aa)) constitute a GIY-YIG domain. The UVR domain maps to 208–243 (QIILDALAERMKQAVNQLNFEEAAVLRDQIKNLRLI).

Belongs to the UvrC family. As to quaternary structure, interacts with UvrB in an incision complex.

The protein localises to the cytoplasm. In terms of biological role, the UvrABC repair system catalyzes the recognition and processing of DNA lesions. UvrC both incises the 5' and 3' sides of the lesion. The N-terminal half is responsible for the 3' incision and the C-terminal half is responsible for the 5' incision. This Legionella pneumophila (strain Paris) protein is UvrABC system protein C.